We begin with the raw amino-acid sequence, 548 residues long: Eukaryotic translation initiation factor 3 subunit D (548 aa).

K53 is modified (N6-acetyllysine). S161 bears the Phosphoserine mark. Residues 285–299 (DFDLLTVSETANEPP) form an RNA gate region. Residues 523-548 (PDGTFSSEEDEEDEEEEEEEEEEEET) form a disordered region. Phosphoserine is present on residues S528 and S529. Over residues 529–548 (SEEDEEDEEEEEEEEEEEET) the composition is skewed to acidic residues.

Belongs to the eIF-3 subunit D family. As to quaternary structure, component of the eukaryotic translation initiation factor 3 (eIF-3) complex, which is composed of 13 subunits: EIF3A, EIF3B, EIF3C, EIF3D, EIF3E, EIF3F, EIF3G, EIF3H, EIF3I, EIF3J, EIF3K, EIF3L and EIF3M. The eIF-3 complex appears to include 3 stable modules: module A is composed of EIF3A, EIF3B, EIF3G and EIF3I; module B is composed of EIF3F, EIF3H, and EIF3M; and module C is composed of EIF3C, EIF3D, EIF3E, EIF3K and EIF3L. EIF3C of module C binds EIF3B of module A and EIF3H of module B, thereby linking the three modules. EIF3J is a labile subunit that binds to the eIF-3 complex via EIF3B. The eIF-3 complex may interact with RPS6KB1 under conditions of nutrient depletion. Mitogenic stimulation may lead to binding and activation of a complex composed of MTOR and RPTOR, leading to phosphorylation and release of RPS6KB1 and binding of EIF4B to eIF-3.

The protein resides in the cytoplasm. In terms of biological role, mRNA cap-binding component of the eukaryotic translation initiation factor 3 (eIF-3) complex, a complex required for several steps in the initiation of protein synthesis of a specialized repertoire of mRNAs. The eIF-3 complex associates with the 40S ribosome and facilitates the recruitment of eIF-1, eIF-1A, eIF-2:GTP:methionyl-tRNAi and eIF-5 to form the 43S pre-initiation complex (43S PIC). The eIF-3 complex stimulates mRNA recruitment to the 43S PIC and scanning of the mRNA for AUG recognition. The eIF-3 complex is also required for disassembly and recycling of post-termination ribosomal complexes and subsequently prevents premature joining of the 40S and 60S ribosomal subunits prior to initiation. The eIF-3 complex specifically targets and initiates translation of a subset of mRNAs involved in cell proliferation, including cell cycling, differentiation and apoptosis, and uses different modes of RNA stem-loop binding to exert either translational activation or repression. In the eIF-3 complex, EIF3D specifically recognizes and binds the 7-methylguanosine cap of a subset of mRNAs. The polypeptide is Eukaryotic translation initiation factor 3 subunit D (Eif3d) (Mus musculus (Mouse)).